Reading from the N-terminus, the 869-residue chain is MVSAIFRKIFGTKNDREIKKYVKRVKFINTLEPKYEAMNDEELKAAFNELRAKVKEGVLGLEEVLNDVFAVVREASKRVLKMRHFDVQLIGGMVLHEGRIAEMKTGEGKTLVATLPVVLNAMSGKGVHVVTVNDYLAKRDATQMGELYNFLGLSVDVVLSGVYDDSVRQAAYNADITYGTNSEFGFDYLRDNMKFDAKDKVQREHNFVIVDEVDSILIDEARTPLIISGPTNRTLDGYIKADEVAQKLTRGEAADPNVPNSKATGDFVVDEKNRTIMITEAGISKAEKLFGVENLYNLENAILSHHLDQALKAHNLFERDVHYVVKNNEVVIVDEFTGRLSEGRRFSEGLHQALEAKEKVKIQEESQTLADTTYQNYFRMYKKLAGMTGTAQTEATEFSQIYKLDVISIPTNVPVMRIDKNDLIYKTQAEKFKAVIDEIKRSHEKGQPVLVGTASIERSEVLHEMLVKAKIPHSVLNAKNHEKEAQIIADAGAKGAVTIATNMAGRGVDIRIDDEVRALGGLYIIGTERHESRRIDNQLRGRAGRQGDPGMSRFYLSLEDNLLRIFGSDRIKAIMDRLGIDEGESIESRMVTRAVENAQKKVESLHFEARKHLLEYDDVANEQRKTIYKYRDELLDKEYDMSEKIAQNRGEYVALLLDQAEIFHGGLKDDYDIKNLCALIFNDCGEEINESELKGLEYDEILAKLTEILAKRYDEKMSVLEPTQKRDIEKVLYLQVLDNAWREHLYQMDILKTGIGLRGYNQKDPLIEYKKESYNLFVELVSRLKSESVKMLQMVRLRSREEQERETAAMLERMQEQQDEGLKFNQREGEDAPAVREKKIPRNSPCPCGSGKKYKDCCGKSGPKKGILA.

ATP-binding positions include Q88, 106–110 (GEGKT), and D509. The segment covering 818–840 (QDEGLKFNQREGEDAPAVREKKI) has biased composition (basic and acidic residues). The disordered stretch occupies residues 818–869 (QDEGLKFNQREGEDAPAVREKKIPRNSPCPCGSGKKYKDCCGKSGPKKGILA). 4 residues coordinate Zn(2+): C846, C848, C857, and C858.

It belongs to the SecA family. In terms of assembly, monomer and homodimer. Part of the essential Sec protein translocation apparatus which comprises SecA, SecYEG and auxiliary proteins SecDF-YajC and YidC. Requires Zn(2+) as cofactor.

It localises to the cell inner membrane. The protein resides in the cytoplasm. It carries out the reaction ATP + H2O + cellular proteinSide 1 = ADP + phosphate + cellular proteinSide 2.. In terms of biological role, part of the Sec protein translocase complex. Interacts with the SecYEG preprotein conducting channel. Has a central role in coupling the hydrolysis of ATP to the transfer of proteins into and across the cell membrane, serving as an ATP-driven molecular motor driving the stepwise translocation of polypeptide chains across the membrane. This chain is Protein translocase subunit SecA, found in Campylobacter curvus (strain 525.92).